The sequence spans 291 residues: uncharacterized protein (291 aa).

Residues 1–55 (MRTHDIPRSPLVGHKKNAAPDGIGASRACCPARENEPFKKGSTNSRGGGVEWSRS) are disordered. The next 2 helical transmembrane spans lie at 74-96 (WWAVGPVLGICAGVWGAAHPVHA) and 188-210 (YYYLAIPVALTAGYTVAFWRIRL).

The protein to T.pallidum TP_0733.

The protein resides in the cell membrane. This is an uncharacterized protein from Treponema pallidum (strain Nichols).